A 505-amino-acid polypeptide reads, in one-letter code: MAWENVRVRVAPSPTGDPHVGTAYMALFNEIFAKRFNGKMILRIEDTDQTRSRDDYEKNIFSALKWCGIQWDEGPDIGGPYGPYRQSERTEIYREYAELLLKTDYAYKCFATPKELEEMRAVATTLGYRGGYDRRYRYLSPEEIEARTREGQPYTIRLKVPLTGECVLDDYCKGRVVFPWADVDDQVLIKSDGFPTYHFANVVDDHLMGITHVLRGEEWLSSTPKHLLLYEAFGWEAPTFLHMPLLLNPDGTKLSKRKNPTSIFYYRDAGYVKEAFMNFLTLMGYSMEGDEEIYSLEKLIANFDPRRIGKSGAVFDTRKLDWMNKHYLTHEKSSESLLAKLKDWLINDEFFLKILPLCQSRITTLAEFIGFTGFFFSVLPEYSKEELLPATIVEEKAAILLYSYVKYLEKADLWVKDQFYQGSKWLSSAFQVHHKKVVIPLLYVAITGKKQGLPLFDSMELLGKPRTRARLVHAQNLLGGVPKKIQTTIDKVLKEEDFENKIFEF.

Residues 12-22 (PSPTGDPHVGT) carry the 'HIGH' region motif. A 'KMSKS' region motif is present at residues 253–257 (KLSKR). K256 is a binding site for ATP.

The protein belongs to the class-I aminoacyl-tRNA synthetase family. Glutamate--tRNA ligase type 1 subfamily. In terms of assembly, monomer.

The protein localises to the cytoplasm. It carries out the reaction tRNA(Glu) + L-glutamate + ATP = L-glutamyl-tRNA(Glu) + AMP + diphosphate. In terms of biological role, catalyzes the attachment of glutamate to tRNA(Glu) in a two-step reaction: glutamate is first activated by ATP to form Glu-AMP and then transferred to the acceptor end of tRNA(Glu). This Chlamydophila psittaci (strain ATCC VR-125 / 6BC) (Chlamydia psittaci) protein is Glutamate--tRNA ligase.